Here is a 110-residue protein sequence, read N- to C-terminus: Small ribosomal subunit protein bS18 (110 aa).

The segment covering 1–18 has biased composition (low complexity); it reads MSEATTTTTTTSAPRPGG. The tract at residues 1–41 is disordered; that stretch reads MSEATTTTTTTSAPRPGGRPSGPRPDRGPGGPRKKRPFQRR. Positions 32-41 are enriched in basic residues; sequence PRKKRPFQRR.

Belongs to the bacterial ribosomal protein bS18 family. In terms of assembly, part of the 30S ribosomal subunit. Forms a tight heterodimer with protein bS6.

Functionally, binds as a heterodimer with protein bS6 to the central domain of the 16S rRNA, where it helps stabilize the platform of the 30S subunit. The sequence is that of Small ribosomal subunit protein bS18 from Trichlorobacter lovleyi (strain ATCC BAA-1151 / DSM 17278 / SZ) (Geobacter lovleyi).